Here is a 173-residue protein sequence, read N- to C-terminus: Probable transcription termination protein NusA (173 aa).

The region spanning 31–97 (DEKIVFVVKE…EDVWVKKFGN (67 aa)) is the KH domain. Residues 147 to 162 (ADNRPKKDEIPEKAAE) are compositionally biased toward basic and acidic residues. The disordered stretch occupies residues 147-173 (ADNRPKKDEIPEKAAESSENVQAEENQ). Residues 163–173 (SSENVQAEENQ) show a composition bias toward polar residues.

It belongs to the NusA family.

It is found in the cytoplasm. Functionally, participates in transcription termination. The chain is Probable transcription termination protein NusA from Methanococcus vannielii (strain ATCC 35089 / DSM 1224 / JCM 13029 / OCM 148 / SB).